The chain runs to 59 residues: CDRRFSRSDELTRHIRIHTGQKPFQCRICMRNFSRSDHLTTHIRTHTGEKPFACDICGR.

3 consecutive C2H2-type zinc fingers follow at residues 1 to 18, 24 to 46, and 52 to 59; these read CDRR…IRIH, FQCR…IRTH, and FACDICGR.

This sequence belongs to the EGR C2H2-type zinc-finger protein family.

It is found in the nucleus. Its subcellular location is the cytoplasm. Its function is as follows. Transcriptional regulator. Recognizes and binds to the DNA sequence 5'-GCG(T/G)GGGCG-3'(EGR-site) in the promoter region of target genes. Binds double-stranded target DNA, irrespective of the cytosine methylation status. Regulates the transcription of numerous target genes, and thereby plays an important role in regulating the response to growth factors, DNA damage, and ischemia. Plays a role in the regulation of cell survival, proliferation and cell death. Mediates responses to ischemia and hypoxia; regulates the expression of proteins that are involved in inflammatory processes. Plays a role in regulating the expression of circadian clock genes. The chain is Early growth response protein 1 (EGR1) from Serinus canaria (Island canary).